Here is a 353-residue protein sequence, read N- to C-terminus: ATP-dependent kinase YFH7 (353 aa).

ATP is bound at residue 31 to 39 (GSPGSGKST).

The protein belongs to the YFH7 family.

Functionally, ATP-dependent kinase that could be involved in endoplasmic reticulum membrane assembly. The chain is ATP-dependent kinase YFH7 (YFH7) from Saccharomyces cerevisiae (strain ATCC 204508 / S288c) (Baker's yeast).